The following is a 408-amino-acid chain: uncharacterized protein (408 aa).

12 helical membrane passes run 9–29 (WFVL…RNSF), 49–69 (VSVS…GFFI), 77–97 (IMAL…YSPN), 100–120 (VFSA…VGVT), 135–155 (LALA…SPIW), 167–187 (TYTI…VFGM), 216–236 (LIHI…IIDA), 252–272 (GMMA…GWLS), 283–303 (SILF…ILGI), 308–328 (LWYF…IPLT), 340–360 (LIGS…ALSV), and 373–393 (YLLI…IELV).

It belongs to the major facilitator superfamily.

It localises to the cell membrane. This is an uncharacterized protein from Bacillus subtilis (strain 168).